The sequence spans 205 residues: SREBP regulating gene protein (205 aa).

At 1–16 the chain is on the cytoplasmic side; it reads MVNLAAMVWRRLLRKR. The helical transmembrane segment at 17–35 threads the bilayer; sequence WVLALVFGLSLVYFLTSTF. At 36-205 the chain is on the lumenal side; that stretch reads KQEERAVRDR…GESPPELFPA (170 aa). Asparagine 67 carries an N-linked (GlcNAc...) asparagine glycan.

This sequence belongs to the SPRING family. Interacts with SCAP.

It is found in the golgi apparatus membrane. In terms of biological role, positively regulates hepatic SREBP signaling pathway by modulating the proper localization of SCAP (SREBP cleavage-activating protein) to the endoplasmic reticulum, thereby controlling the level of functional SCAP. The protein is SREBP regulating gene protein of Bos taurus (Bovine).